Consider the following 692-residue polypeptide: Tripartite terminase subunit 1 (692 aa).

The C3H1-type zinc-finger motif lies at 190-218; it reads CYLCYEELQMTPNNGSSVQKRLNGVLCEH. 634–641 provides a ligand contact to ATP; it reads YNELYGQR.

This sequence belongs to the herpesviridae TRM1 protein family. Associates with TRM2 and TRM3 to form the tripartite terminase complex. Interacts with portal protein.

It localises to the host nucleus. Functionally, component of the molecular motor that translocates viral genomic DNA in empty capsid during DNA packaging. Forms a tripartite terminase complex together with TRM2 and TRM3 in the host cytoplasm. Once the complex reaches the host nucleus, it interacts with the capsid portal vertex. This portal forms a ring in which genomic DNA is translocated into the capsid. TRM1 carries an endonuclease activity that plays an important role for the cleavage of concatemeric viral DNA into unit length genomes. This Elephas maximus (Indian elephant) protein is Tripartite terminase subunit 1.